A 520-amino-acid polypeptide reads, in one-letter code: Retinoic acid receptor RXR-beta (520 aa).

The tract at residues 1-167 (MSWATRPPFL…GGSGPPEDVK (167 aa)) is disordered. The tract at residues 1 to 191 (MSWATRPPFL…PGGPGAGKRL (191 aa)) is modulating. Arg25 carries the omega-N-methylarginine modification. Residues 64-79 (EAGRDGMGDSGRDSRS) are compositionally biased toward basic and acidic residues. Over residues 95 to 118 (SSPPGPPLTPSAPPPPMPPPPLGS) the composition is skewed to pro residues. Residues 119-130 (PFPVISSSMGSP) are compositionally biased toward low complexity. Positions 131–140 (GLPPPAPPGF) are enriched in pro residues. NR C4-type zinc fingers lie at residues 192–212 (CAIC…CEGC) and 228–252 (CRDN…YQKC). Positions 192-257 (CAICGDRSSG…RYQKCLATGM (66 aa)) form a DNA-binding region, nuclear receptor. A hinge region spans residues 258–382 (KREAVQEERQ…HRSIDVRDGI (125 aa)). The segment covering 263 to 275 (QEERQRGKDKDGD) has biased composition (basic and acidic residues). Disordered regions lie at residues 263–285 (QEER…APEE) and 300–323 (QKSD…NDPV). One can recognise an NR LBD domain in the interval 283–516 (PEEMPVDRIL…TFLMEMLEAP (234 aa)). The span at 307–317 (EGPGATGGGGS) shows a compositional bias: gly residues.

It belongs to the nuclear hormone receptor family. NR2 subfamily. Homodimer (in vitro). Heterodimer with other retinoic acid receptor family members. Binds DNA preferentially as a RAR/RXR heterodimer. Interacts with NR1H3. Interacts with AKAP13. In all tissues tested, including brain, thymus, spleen and liver.

It is found in the nucleus. The protein localises to the cytoplasm. Receptor for retinoic acid. Retinoic acid receptors bind as heterodimers to their target response elements in response to their ligands, all-trans or 9-cis retinoic acid, and regulate gene expression in various biological processes. The RAR/RXR heterodimers bind to the retinoic acid response elements (RARE). This Mus musculus (Mouse) protein is Retinoic acid receptor RXR-beta (Rxrb).